The primary structure comprises 207 residues: LexA repressor (207 aa).

A DNA-binding region (H-T-H motif) is located at residues 28–48 (VREIGEAVGLASSSTVHGHLA). Catalysis depends on for autocatalytic cleavage activity residues Ser129 and Lys167.

This sequence belongs to the peptidase S24 family. As to quaternary structure, homodimer.

It catalyses the reaction Hydrolysis of Ala-|-Gly bond in repressor LexA.. In terms of biological role, represses a number of genes involved in the response to DNA damage (SOS response), including recA and lexA. In the presence of single-stranded DNA, RecA interacts with LexA causing an autocatalytic cleavage which disrupts the DNA-binding part of LexA, leading to derepression of the SOS regulon and eventually DNA repair. This is LexA repressor from Geobacillus kaustophilus (strain HTA426).